Consider the following 407-residue polypeptide: 4-hydroxy-3-methylbut-2-en-1-yl diphosphate synthase (flavodoxin) (407 aa).

The [4Fe-4S] cluster site is built by Cys-296, Cys-299, Cys-342, and Glu-349.

It belongs to the IspG family. Requires [4Fe-4S] cluster as cofactor.

It catalyses the reaction (2E)-4-hydroxy-3-methylbut-2-enyl diphosphate + oxidized [flavodoxin] + H2O + 2 H(+) = 2-C-methyl-D-erythritol 2,4-cyclic diphosphate + reduced [flavodoxin]. Its pathway is isoprenoid biosynthesis; isopentenyl diphosphate biosynthesis via DXP pathway; isopentenyl diphosphate from 1-deoxy-D-xylulose 5-phosphate: step 5/6. Its function is as follows. Converts 2C-methyl-D-erythritol 2,4-cyclodiphosphate (ME-2,4cPP) into 1-hydroxy-2-methyl-2-(E)-butenyl 4-diphosphate. The sequence is that of 4-hydroxy-3-methylbut-2-en-1-yl diphosphate synthase (flavodoxin) from Methylococcus capsulatus (strain ATCC 33009 / NCIMB 11132 / Bath).